The following is a 379-amino-acid chain: Cyclic dinucleotide synthase CdnE (379 aa).

Residues glutamine 107, serine 109, aspartate 123, and lysine 179 each coordinate UTP. Aspartate 123 contributes to the Mg(2+) binding site. Mg(2+) is bound at residue aspartate 193. Residues asparagine 229, lysine 257, and serine 274 each contribute to the UTP site. Positions 328-330 (KIF) match the Pyrimidine specificity motif (R/Q)xW in donor pocket motif.

It belongs to the CD-NTase family. E02 subfamily. It depends on Mg(2+) as a cofactor.

It carries out the reaction 2 UTP = c-di-UMP + 2 diphosphate. The enzyme catalyses UTP + ATP = 3',3'-cUAMP + 2 diphosphate. It catalyses the reaction UTP + CTP = cyclic CMP-UMP + 2 diphosphate. Cyclic nucleotide synthase (second messenger synthase) of a CBASS antivirus system. CBASS (cyclic oligonucleotide-based antiphage signaling system) provides immunity against bacteriophage. The CD-NTase protein synthesizes cyclic nucleotides in response to infection; these serve as specific second messenger signals. The signals activate a diverse range of effectors, leading to bacterial cell death and thus abortive phage infection. The effector protein for this system is membrane protein Cap15. A type I-B(UU) CBASS system. Its function is as follows. Cyclic dinucleotide synthase that preferentially catalyzes the synthesis of 3',3'-cyclic UMP-UMP (c-di-UMP) and 3',3'-cyclic UMP-AMP, with minor amounts of 3',3'-cyclic UMP-CMP, which are second messengers for cell signal transduction. Functionally, protects E.coli against phage infection. When the CBASS operon (cap15-cdnE) is introduced in E.coli MG1655 it protects against phages T2, T4, T5, T6, SECPhi4, SECPhi6, SECPhi17, SECPhi18 and SECPhi27, but not against phage T7. The sequence is that of Cyclic dinucleotide synthase CdnE from Yersinia aleksiciae.